The following is a 176-amino-acid chain: Small ribosomal subunit protein uS5 (176 aa).

The region spanning Leu-11–Val-74 is the S5 DRBM domain.

Belongs to the universal ribosomal protein uS5 family. In terms of assembly, part of the 30S ribosomal subunit. Contacts proteins S4 and S8.

Its function is as follows. With S4 and S12 plays an important role in translational accuracy. Functionally, located at the back of the 30S subunit body where it stabilizes the conformation of the head with respect to the body. This Rickettsia bellii (strain RML369-C) protein is Small ribosomal subunit protein uS5.